Reading from the N-terminus, the 436-residue chain is Methylenetetrahydrofolate--tRNA-(uracil-5-)-methyltransferase TrmFO (436 aa).

9–14 (GAGLAG) provides a ligand contact to FAD.

The protein belongs to the MnmG family. TrmFO subfamily. It depends on FAD as a cofactor.

The protein localises to the cytoplasm. The catalysed reaction is uridine(54) in tRNA + (6R)-5,10-methylene-5,6,7,8-tetrahydrofolate + NADH + H(+) = 5-methyluridine(54) in tRNA + (6S)-5,6,7,8-tetrahydrofolate + NAD(+). It carries out the reaction uridine(54) in tRNA + (6R)-5,10-methylene-5,6,7,8-tetrahydrofolate + NADPH + H(+) = 5-methyluridine(54) in tRNA + (6S)-5,6,7,8-tetrahydrofolate + NADP(+). Its function is as follows. Catalyzes the folate-dependent formation of 5-methyl-uridine at position 54 (M-5-U54) in all tRNAs. This chain is Methylenetetrahydrofolate--tRNA-(uracil-5-)-methyltransferase TrmFO, found in Ligilactobacillus salivarius (strain UCC118) (Lactobacillus salivarius).